The chain runs to 1375 residues: DNA-directed RNA polymerase subunit beta (1375 aa).

This sequence belongs to the RNA polymerase beta chain family. In terms of assembly, the RNAP catalytic core consists of 2 alpha, 1 beta, 1 beta' and 1 omega subunit. When a sigma factor is associated with the core the holoenzyme is formed, which can initiate transcription.

The catalysed reaction is RNA(n) + a ribonucleoside 5'-triphosphate = RNA(n+1) + diphosphate. Functionally, DNA-dependent RNA polymerase catalyzes the transcription of DNA into RNA using the four ribonucleoside triphosphates as substrates. The protein is DNA-directed RNA polymerase subunit beta of Methylibium petroleiphilum (strain ATCC BAA-1232 / LMG 22953 / PM1).